Consider the following 248-residue polypeptide: Triosephosphate isomerase (248 aa).

The substrate site is built by Asn10 and Lys12. His95 (electrophile) is an active-site residue. Glu165 functions as the Proton acceptor in the catalytic mechanism.

Belongs to the triosephosphate isomerase family. In terms of assembly, homodimer.

Its subcellular location is the cytoplasm. It carries out the reaction D-glyceraldehyde 3-phosphate = dihydroxyacetone phosphate. The protein operates within carbohydrate biosynthesis; gluconeogenesis. Its pathway is carbohydrate degradation; glycolysis; D-glyceraldehyde 3-phosphate from glycerone phosphate: step 1/1. The protein is Triosephosphate isomerase (TPI1) of Candida albicans (strain SC5314 / ATCC MYA-2876) (Yeast).